The sequence spans 549 residues: Glucose-6-phosphate isomerase (549 aa).

Glu355 acts as the Proton donor in catalysis. Residues His387 and Lys515 contribute to the active site.

It belongs to the GPI family.

It is found in the cytoplasm. The catalysed reaction is alpha-D-glucose 6-phosphate = beta-D-fructose 6-phosphate. It participates in carbohydrate biosynthesis; gluconeogenesis. It functions in the pathway carbohydrate degradation; glycolysis; D-glyceraldehyde 3-phosphate and glycerone phosphate from D-glucose: step 2/4. Catalyzes the reversible isomerization of glucose-6-phosphate to fructose-6-phosphate. The protein is Glucose-6-phosphate isomerase of Pasteurella multocida (strain Pm70).